The following is a 612-amino-acid chain: DNA mismatch repair protein MutL (612 aa).

This sequence belongs to the DNA mismatch repair MutL/HexB family.

This protein is involved in the repair of mismatches in DNA. It is required for dam-dependent methyl-directed DNA mismatch repair. May act as a 'molecular matchmaker', a protein that promotes the formation of a stable complex between two or more DNA-binding proteins in an ATP-dependent manner without itself being part of a final effector complex. This is DNA mismatch repair protein MutL from Herminiimonas arsenicoxydans.